The primary structure comprises 783 residues: Tripartite motif-containing protein 67 (783 aa).

The RING-type; degenerate zinc-finger motif lies at 7-42 (CPVCGSLFREPIILPCSHNVCLPCARTIAVQTPDGE). The B box-type 1; degenerate zinc-finger motif lies at 206 to 253 (AICQLCDRTPPEPAATLCEQCDVLYCSACQLKCHPSRGPFAKHRLVQP). A disordered region spans residues 247–295 (KHRLVQPPPPPPPPAEAASGPTGTAQGAPSGGGGCKSPGGAGAGATGGS). Pro residues predominate over residues 252 to 261 (QPPPPPPPPA). Positions 275-293 (PSGGGGCKSPGGAGAGATG) are enriched in gly residues. The segment at 298 to 340 (RKFPTCPEHEMENYSMYCVSCRTPVCYLCLEEGRHAKHEVKPL) adopts a B box-type 2 zinc-finger fold. Zn(2+) contacts are provided by cysteine 303, histidine 306, cysteine 326, and histidine 332. Residues 345–382 (KQHKAQLSQALNGVSDKAKEAKEFLVQLKNILQQIQEN) are a coiled coil. In terms of domain architecture, COS spans 448-506 (IKENDPSGFLQISDALIKRVQVSQEQWVKGALEPKVSAEFDLTLDSEPLLQAIHQLDFI). Residues 513 to 607 (PPVPLLQLEK…KTVVLQTSDV (95 aa)) form the Fibronectin type-III domain. The 192-residue stretch at 589–780 (NSSGVGPYSK…VPTNLGRPKL (192 aa)) folds into the B30.2/SPRY domain.

It belongs to the TRIM/RBCC family.

It is found in the cytoplasm. The protein resides in the cytoskeleton. In Homo sapiens (Human), this protein is Tripartite motif-containing protein 67 (TRIM67).